The following is a 108-amino-acid chain: Movement protein (108 aa).

Residues 1–25 (MDASSQYSALPYPQPPRVPSAAPSA) form a disordered region. Residues 35 to 55 (EIVIFTFVSVLALYLLWLWVL) form a helical membrane-spanning segment. The tract at residues 73 to 108 (LIFGPGERPPVASADGSRPVPDPSPPVRRDLDLSRV) is disordered. Residues 99 to 108 (VRRDLDLSRV) show a composition bias toward basic and acidic residues.

The protein belongs to the mastrevirus movement protein family. As to quaternary structure, interacts with the capsid protein (CP). Part of a MP-CP-viral DNA complex.

The protein localises to the host membrane. Involved in the viral transport within, and between cells. This chain is Movement protein, found in Megathyrsus maximus (PanSV).